A 1747-amino-acid chain; its full sequence is E3 ubiquitin-protein ligase listerin (1747 aa).

The interval 1–24 (MGGKTKQAPRTKNNAKPSSSSRTA) is disordered. Over residues 8 to 24 (APRTKNNAKPSSSSRTA) the composition is skewed to polar residues. HEAT repeat units follow at residues 65-102 (AAIS…QSDV), 106-144 (KNIL…KCKK), 346-383 (NIRK…KVTQ), 424-461 (NAYF…NVLE), and 508-547 (KFWI…ANPS). Ser-566 carries the phosphoserine modification. HEAT repeat units follow at residues 612-653 (SRYI…LLGQ), 664-711 (EIVF…CAEA), 789-825 (SFIA…EHRP), 952-989 (LSRN…DPED), 1005-1042 (KWNE…ELVL), 1053-1090 (GNSS…FCPQ), 1129-1166 (KLSQ…NFEG), 1216-1258 (VEFI…SIAQ), 1269-1307 (VAVY…LFAK), 1330-1363 (FQAC…NSNI), 1364-1400 (TLDH…HFVA), and 1500-1539 (ENFL…QKDR). The RING-type zinc-finger motif lies at 1697 to 1744 (CYVCYTVIHQETCQLPKLTCKTCKKKFHGPCLYKWFTTSSKSTCPICR).

This sequence belongs to the LTN1 family. As to quaternary structure, component of the ribosome quality control complex (RQC), composed of at least the E3 ubiquitin ligase l(3)76BDr/LTN1 and Clbn/NEMF. The complex probably also contains TCF25 as well as TER94/VCP and its ubiquitin-binding cofactors. RQC forms a stable complex with 60S ribosomal subunits.

The protein resides in the cytoplasm. The protein localises to the cytosol. The enzyme catalyses S-ubiquitinyl-[E2 ubiquitin-conjugating enzyme]-L-cysteine + [acceptor protein]-L-lysine = [E2 ubiquitin-conjugating enzyme]-L-cysteine + N(6)-ubiquitinyl-[acceptor protein]-L-lysine.. Its pathway is protein modification; protein ubiquitination. E3 ubiquitin-protein ligase component of the ribosome quality control complex (RQC), a ribosome-associated complex that mediates ubiquitination and extraction of incompletely synthesized nascent chains for proteasomal degradation. Ubiquitination leads to TER94/VCP recruitment for extraction and degradation of the incomplete translation product. This is E3 ubiquitin-protein ligase listerin from Drosophila melanogaster (Fruit fly).